Here is a 51-residue protein sequence, read N- to C-terminus: Large ribosomal subunit protein eL39 (51 aa).

The interval 1 to 22 (MPSQKSFRTKQKLAKAQKQNRP) is disordered.

Belongs to the eukaryotic ribosomal protein eL39 family. As to quaternary structure, interacts with YIH1.

This Debaryomyces hansenii (strain ATCC 36239 / CBS 767 / BCRC 21394 / JCM 1990 / NBRC 0083 / IGC 2968) (Yeast) protein is Large ribosomal subunit protein eL39 (RPL39).